We begin with the raw amino-acid sequence, 90 residues long: Small ribosomal subunit protein bS18 (90 aa).

This sequence belongs to the bacterial ribosomal protein bS18 family. In terms of assembly, part of the 30S ribosomal subunit. Forms a tight heterodimer with protein bS6.

Functionally, binds as a heterodimer with protein bS6 to the central domain of the 16S rRNA, where it helps stabilize the platform of the 30S subunit. The protein is Small ribosomal subunit protein bS18 of Bordetella avium (strain 197N).